The primary structure comprises 404 residues: Nicotinate phosphoribosyltransferase (404 aa).

Residue histidine 225 is modified to Phosphohistidine; by autocatalysis.

The protein belongs to the NAPRTase family. In terms of processing, transiently phosphorylated on a His residue during the reaction cycle. Phosphorylation strongly increases the affinity for substrates and increases the rate of nicotinate D-ribonucleotide production. Dephosphorylation regenerates the low-affinity form of the enzyme, leading to product release.

The enzyme catalyses nicotinate + 5-phospho-alpha-D-ribose 1-diphosphate + ATP + H2O = nicotinate beta-D-ribonucleotide + ADP + phosphate + diphosphate. It participates in cofactor biosynthesis; NAD(+) biosynthesis; nicotinate D-ribonucleotide from nicotinate: step 1/1. Its function is as follows. Catalyzes the synthesis of beta-nicotinate D-ribonucleotide from nicotinate and 5-phospho-D-ribose 1-phosphate at the expense of ATP. The polypeptide is Nicotinate phosphoribosyltransferase (Acinetobacter baumannii (strain ATCC 17978 / DSM 105126 / CIP 53.77 / LMG 1025 / NCDC KC755 / 5377)).